Reading from the N-terminus, the 256-residue chain is Thiazole synthase (256 aa).

The Schiff-base intermediate with DXP role is filled by Lys-97. 1-deoxy-D-xylulose 5-phosphate contacts are provided by residues Gly-158, 184–185, and 206–207; these read AG and NT.

This sequence belongs to the ThiG family. Homotetramer. Forms heterodimers with either ThiH or ThiS.

The protein localises to the cytoplasm. It catalyses the reaction [ThiS sulfur-carrier protein]-C-terminal-Gly-aminoethanethioate + 2-iminoacetate + 1-deoxy-D-xylulose 5-phosphate = [ThiS sulfur-carrier protein]-C-terminal Gly-Gly + 2-[(2R,5Z)-2-carboxy-4-methylthiazol-5(2H)-ylidene]ethyl phosphate + 2 H2O + H(+). It functions in the pathway cofactor biosynthesis; thiamine diphosphate biosynthesis. Functionally, catalyzes the rearrangement of 1-deoxy-D-xylulose 5-phosphate (DXP) to produce the thiazole phosphate moiety of thiamine. Sulfur is provided by the thiocarboxylate moiety of the carrier protein ThiS. In vitro, sulfur can be provided by H(2)S. The sequence is that of Thiazole synthase from Pelotomaculum thermopropionicum (strain DSM 13744 / JCM 10971 / SI).